We begin with the raw amino-acid sequence, 448 residues long: Phosphoglucosamine mutase (448 aa).

The active-site Phosphoserine intermediate is Ser101. The Mg(2+) site is built by Ser101, Asp242, Asp244, and Asp246. Residue Ser101 is modified to Phosphoserine.

Belongs to the phosphohexose mutase family. The cofactor is Mg(2+). Activated by phosphorylation.

The enzyme catalyses alpha-D-glucosamine 1-phosphate = D-glucosamine 6-phosphate. Its function is as follows. Catalyzes the conversion of glucosamine-6-phosphate to glucosamine-1-phosphate. This is Phosphoglucosamine mutase from Afipia carboxidovorans (strain ATCC 49405 / DSM 1227 / KCTC 32145 / OM5) (Oligotropha carboxidovorans).